Consider the following 283-residue polypeptide: Acetylglutamate kinase (283 aa).

Substrate is bound by residues 64–65, Arg-86, and Asn-178; that span reads GG.

Belongs to the acetylglutamate kinase family. ArgB subfamily.

It is found in the cytoplasm. It catalyses the reaction N-acetyl-L-glutamate + ATP = N-acetyl-L-glutamyl 5-phosphate + ADP. The protein operates within amino-acid biosynthesis; L-arginine biosynthesis; N(2)-acetyl-L-ornithine from L-glutamate: step 2/4. Functionally, catalyzes the ATP-dependent phosphorylation of N-acetyl-L-glutamate. The protein is Acetylglutamate kinase of Lactococcus lactis subsp. cremoris (strain SK11).